The sequence spans 154 residues: Myoglobin (154 aa).

In terms of domain architecture, Globin spans 2-148 (GLSDDEWNHV…FRNDMASKYK (147 aa)). Position 65 (His-65) interacts with nitrite. Residue His-65 coordinates O2. His-94 is a heme b binding site.

Belongs to the globin family. As to quaternary structure, monomeric.

It localises to the cytoplasm. The protein localises to the sarcoplasm. It catalyses the reaction Fe(III)-heme b-[protein] + nitric oxide + H2O = Fe(II)-heme b-[protein] + nitrite + 2 H(+). It carries out the reaction H2O2 + AH2 = A + 2 H2O. Its function is as follows. Monomeric heme protein which primary function is to store oxygen and facilitate its diffusion within muscle tissues. Reversibly binds oxygen through a pentacoordinated heme iron and enables its timely and efficient release as needed during periods of heightened demand. Depending on the oxidative conditions of tissues and cells, and in addition to its ability to bind oxygen, it also has a nitrite reductase activity whereby it regulates the production of bioactive nitric oxide. Under stress conditions, like hypoxia and anoxia, it also protects cells against reactive oxygen species thanks to its pseudoperoxidase activity. This Chelonia mydas (Green sea-turtle) protein is Myoglobin (MB).